The chain runs to 391 residues: Inhibin beta B chain (391 aa).

Positions 1–25 are cleaved as a signal peptide; it reads MDGAARRGVLAALLACGLLLLGAAA. Residues 26–276 constitute a propeptide that is removed on maturation; that stretch reads TPTPPPAGSS…ADNKHRIRKR (251 aa). Residues 27–47 form a disordered region; sequence PTPPPAGSSPQDTCTSCGFRR. N-linked (GlcNAc...) asparagine glycosylation occurs at Asn-77. Intrachain disulfides connect Cys-280/Cys-288, Cys-287/Cys-356, Cys-316/Cys-388, and Cys-320/Cys-390.

The protein belongs to the TGF-beta family. Dimeric, linked by one or more disulfide bonds. Inhibin A is a dimer of alpha and beta-A. Inhibin B is a dimer of alpha and beta-B. Activin A is a homodimer of beta-A. Activin B is a homodimer of beta-B. Activin AB is a dimer of beta-A and beta-B.

It localises to the secreted. In terms of biological role, inhibins and activins inhibit and activate, respectively, the secretion of follitropin by the pituitary gland. Inhibins/activins are involved in regulating a number of diverse functions such as hypothalamic and pituitary hormone secretion, gonadal hormone secretion, germ cell development and maturation, erythroid differentiation, insulin secretion, nerve cell survival, embryonic axial development or bone growth, depending on their subunit composition. Inhibins appear to oppose the functions of activins. The protein is Inhibin beta B chain (INHBB) of Gallus gallus (Chicken).